A 130-amino-acid chain; its full sequence is uncharacterized protein (130 aa).

Helical transmembrane passes span 35 to 57 (FLIT…FISL) and 72 to 91 (IVFF…LLLL).

Its subcellular location is the cell membrane. This is an uncharacterized protein from Pasteurella multocida (strain Pm70).